A 177-amino-acid chain; its full sequence is ATP-dependent protease subunit HslV (177 aa).

Thr7 is a catalytic residue. Residues Gly162, Cys165, and Thr168 each contribute to the Na(+) site.

It belongs to the peptidase T1B family. HslV subfamily. As to quaternary structure, a double ring-shaped homohexamer of HslV is capped on each side by a ring-shaped HslU homohexamer. The assembly of the HslU/HslV complex is dependent on binding of ATP.

It localises to the cytoplasm. The catalysed reaction is ATP-dependent cleavage of peptide bonds with broad specificity.. With respect to regulation, allosterically activated by HslU binding. Protease subunit of a proteasome-like degradation complex believed to be a general protein degrading machinery. This is ATP-dependent protease subunit HslV from Persephonella marina (strain DSM 14350 / EX-H1).